A 414-amino-acid polypeptide reads, in one-letter code: MANSC domain-containing protein 1 (414 aa).

The signal sequence occupies residues 1–24 (MLFRGTSLAYSLLVISFLTPRSSA). The Extracellular portion of the chain corresponds to 25 to 369 (GQNCLTKSLE…HGLSFEKWLL (345 aa)). In terms of domain architecture, MANSC spans 32–116 (SLEDVVIDIQ…LKPAKGLVTY (85 aa)). N-linked (GlcNAc...) asparagine glycosylation is found at Asn-128, Asn-234, and Asn-335. Residues 311–339 (FQGGSTLTSDPRHGKSSTSESSITNKTAS) are disordered. Polar residues predominate over residues 326-338 (SSTSESSITNKTA). The chain crosses the membrane as a helical span at residues 370–392 (IGTLLCGVLFLVIGLVLLGRMLV). Topologically, residues 393-414 (EALRRKRYSRLDYLINGIYVDI) are cytoplasmic.

The protein localises to the membrane. This Mus musculus (Mouse) protein is MANSC domain-containing protein 1 (Mansc1).